The sequence spans 98 residues: NADH-ubiquinone oxidoreductase chain 4L (98 aa).

3 helical membrane passes run 1–21 (MTMV…GLLM), 29–49 (SLLC…VTIL), and 61–81 (IILL…LVMV).

Belongs to the complex I subunit 4L family. Core subunit of respiratory chain NADH dehydrogenase (Complex I) which is composed of 45 different subunits.

It is found in the mitochondrion inner membrane. It carries out the reaction a ubiquinone + NADH + 5 H(+)(in) = a ubiquinol + NAD(+) + 4 H(+)(out). Core subunit of the mitochondrial membrane respiratory chain NADH dehydrogenase (Complex I) which catalyzes electron transfer from NADH through the respiratory chain, using ubiquinone as an electron acceptor. Part of the enzyme membrane arm which is embedded in the lipid bilayer and involved in proton translocation. In Mirounga angustirostris (Northern elephant seal), this protein is NADH-ubiquinone oxidoreductase chain 4L (MT-ND4L).